A 219-amino-acid polypeptide reads, in one-letter code: MKQEKAIVVFSGGQDSTTCLFWAKERFAEIEAVTFNYGQRHRLEIECAEQIAEELGIKHHILDMTLLNQLAPNALTRQDIKVEDGQNGELPSTFVPGRNLLFLSFAGVLASQIGAKHIVTGVCETDFSGYPDCRDVFIKSLNVTLNLSMDNSFVIDTPLMWLNKAQTWELADQFGALEFVRERTLTCYNGVIADGCGECPACKLRKKGLDEYLSYRKEF.

Residue 10–20 (FSGGQDSTTCL) coordinates ATP. Zn(2+)-binding residues include Cys-187, Cys-196, Cys-199, and Cys-202.

It belongs to the QueC family. Homodimer. Zn(2+) serves as cofactor.

It carries out the reaction 7-carboxy-7-deazaguanine + NH4(+) + ATP = 7-cyano-7-deazaguanine + ADP + phosphate + H2O + H(+). It participates in purine metabolism; 7-cyano-7-deazaguanine biosynthesis. In terms of biological role, catalyzes the ATP-dependent conversion of 7-carboxy-7-deazaguanine (CDG) to 7-cyano-7-deazaguanine (preQ(0)). This Lysinibacillus sphaericus (strain C3-41) protein is 7-cyano-7-deazaguanine synthase.